A 251-amino-acid polypeptide reads, in one-letter code: Membrane-anchored junction protein (251 aa).

At 1 to 227 (MSLKPFTYPF…HSNPPPLKEP (227 aa)) the chain is on the nuclear side. A disordered region spans residues 140-225 (RKRKLMEEPS…LEHSNPPPLK (86 aa)). The span at 183–198 (EDSQQDTPASDSTAVT) shows a compositional bias: polar residues. Residues 228–246 (AARGFLGFLSALFPFRYFF) form a helical membrane-spanning segment. Over 247-251 (RKSTQ) the chain is Perinuclear space.

Belongs to the MAJIN family. In terms of assembly, component of the MAJIN-TERB1-TERB2 complex, composed of MAJIN, TERB1 and TERB2.

The protein localises to the nucleus inner membrane. Its subcellular location is the chromosome. It is found in the telomere. In terms of biological role, meiosis-specific telomere-associated protein involved in meiotic telomere attachment to the nucleus inner membrane, a crucial step for homologous pairing and synapsis. Component of the MAJIN-TERB1-TERB2 complex, which promotes telomere cap exchange by mediating attachment of telomeric DNA to the inner nuclear membrane and replacement of the protective cap of telomeric chromosomes: in early meiosis, the MAJIN-TERB1-TERB2 complex associates with telomeric DNA and the shelterin/telosome complex. During prophase, the complex matures and promotes release of the shelterin/telosome complex from telomeric DNA. In the complex, MAJIN acts as the anchoring subunit to the nucleus inner membrane. MAJIN shows DNA-binding activity, possibly for the stabilization of telomere attachment on the nucleus inner membrane. The polypeptide is Membrane-anchored junction protein (Rattus norvegicus (Rat)).